A 376-amino-acid polypeptide reads, in one-letter code: Succinate--CoA ligase [ADP-forming] subunit beta (376 aa).

The ATP-grasp domain occupies 9–237; it reads KEIFSKYGIP…PTEEEKVEAD (229 aa). Residues Lys-46, 53–55, Val-95, and Glu-100 each bind ATP; that span reads GRG. 2 residues coordinate Mg(2+): Asn-192 and Asp-206. Substrate is bound by residues Asn-257 and 314-316; that span reads GIT.

This sequence belongs to the succinate/malate CoA ligase beta subunit family. As to quaternary structure, heterotetramer of two alpha and two beta subunits. Requires Mg(2+) as cofactor.

It carries out the reaction succinate + ATP + CoA = succinyl-CoA + ADP + phosphate. The catalysed reaction is GTP + succinate + CoA = succinyl-CoA + GDP + phosphate. Its pathway is carbohydrate metabolism; tricarboxylic acid cycle; succinate from succinyl-CoA (ligase route): step 1/1. Its function is as follows. Succinyl-CoA synthetase functions in the citric acid cycle (TCA), coupling the hydrolysis of succinyl-CoA to the synthesis of either ATP or GTP and thus represents the only step of substrate-level phosphorylation in the TCA. The beta subunit provides nucleotide specificity of the enzyme and binds the substrate succinate, while the binding sites for coenzyme A and phosphate are found in the alpha subunit. The sequence is that of Succinate--CoA ligase [ADP-forming] subunit beta from Bacteroides thetaiotaomicron (strain ATCC 29148 / DSM 2079 / JCM 5827 / CCUG 10774 / NCTC 10582 / VPI-5482 / E50).